A 632-amino-acid polypeptide reads, in one-letter code: 1-deoxy-D-xylulose-5-phosphate synthase (632 aa).

Residues histidine 77 and 118-120 (GHS) contribute to the thiamine diphosphate site. A Mg(2+)-binding site is contributed by aspartate 149. Thiamine diphosphate contacts are provided by residues 150–151 (GA), asparagine 178, tyrosine 289, and glutamate 372. A Mg(2+)-binding site is contributed by asparagine 178.

The protein belongs to the transketolase family. DXPS subfamily. As to quaternary structure, homodimer. Mg(2+) is required as a cofactor. Requires thiamine diphosphate as cofactor.

It carries out the reaction D-glyceraldehyde 3-phosphate + pyruvate + H(+) = 1-deoxy-D-xylulose 5-phosphate + CO2. It functions in the pathway metabolic intermediate biosynthesis; 1-deoxy-D-xylulose 5-phosphate biosynthesis; 1-deoxy-D-xylulose 5-phosphate from D-glyceraldehyde 3-phosphate and pyruvate: step 1/1. Its function is as follows. Catalyzes the acyloin condensation reaction between C atoms 2 and 3 of pyruvate and glyceraldehyde 3-phosphate to yield 1-deoxy-D-xylulose-5-phosphate (DXP). This Listeria innocua serovar 6a (strain ATCC BAA-680 / CLIP 11262) protein is 1-deoxy-D-xylulose-5-phosphate synthase.